The sequence spans 506 residues: 2-isopropylmalate synthase (506 aa).

Positions 4–266 (ILFMDTTLRD…EPSMTLKEIK (263 aa)) constitute a Pyruvate carboxyltransferase domain. Residues Asp-13, His-201, His-203, and Asn-237 each contribute to the Mn(2+) site. The regulatory domain stretch occupies residues 390–506 (NITQLQVHFV…KLKSFIQLVK (117 aa)).

Belongs to the alpha-IPM synthase/homocitrate synthase family. LeuA type 1 subfamily. In terms of assembly, homodimer. It depends on Mn(2+) as a cofactor.

The protein resides in the cytoplasm. The enzyme catalyses 3-methyl-2-oxobutanoate + acetyl-CoA + H2O = (2S)-2-isopropylmalate + CoA + H(+). It participates in amino-acid biosynthesis; L-leucine biosynthesis; L-leucine from 3-methyl-2-oxobutanoate: step 1/4. Catalyzes the condensation of the acetyl group of acetyl-CoA with 3-methyl-2-oxobutanoate (2-ketoisovalerate) to form 3-carboxy-3-hydroxy-4-methylpentanoate (2-isopropylmalate). This chain is 2-isopropylmalate synthase, found in Bacillus thuringiensis (strain Al Hakam).